The primary structure comprises 873 residues: Rho GTPase-activating protein gacJJ (873 aa).

The disordered stretch occupies residues 64–147 (DEPSSINTSS…NVNNSSNAPT (84 aa)). The segment covering 66–91 (PSSINTSSGNIGSNNNSSSNTPLTGS) has biased composition (low complexity). Residues 103–112 (IGGGGGGGDN) are compositionally biased toward gly residues. Positions 113-144 (GITNSGNIGSSSNSDLKKSTSSGIVNVNNSSN) are enriched in low complexity. The PH domain maps to 301-402 (NPVREGYLKK…WTVLPIVIES (102 aa)). Residues 428–621 (VPIEKTVSGN…SLIRDYQYIF (194 aa)) enclose the Rho-GAP domain. Residues 628–694 (EQKILAKSLY…PASYVELLPH (67 aa)) enclose the SH3 domain. The stretch at 715–761 (MLEMESTKTKNQEIDKNIKQLEITKKELESTINDLENEKAALENDPT) forms a coiled coil.

It is found in the cytoplasm. Rho GTPase-activating protein involved in the signal transduction pathway. This chain is Rho GTPase-activating protein gacJJ (gacJJ), found in Dictyostelium discoideum (Social amoeba).